The chain runs to 402 residues: Pyridinium-3,5-bisthiocarboxylic acid mononucleotide nickel insertion protein (402 aa).

The protein belongs to the LarC family.

The enzyme catalyses Ni(II)-pyridinium-3,5-bisthiocarboxylate mononucleotide = pyridinium-3,5-bisthiocarboxylate mononucleotide + Ni(2+). Its function is as follows. Involved in the biosynthesis of a nickel-pincer cofactor ((SCS)Ni(II) pincer complex). Binds Ni(2+), and functions in nickel delivery to pyridinium-3,5-bisthiocarboxylic acid mononucleotide (P2TMN), to form the mature cofactor. Is thus probably required for the activation of nickel-pincer cofactor-dependent enzymes. This chain is Pyridinium-3,5-bisthiocarboxylic acid mononucleotide nickel insertion protein, found in Desulfitobacterium hafniense (strain Y51).